A 334-amino-acid chain; its full sequence is Phosphoribosylformylglycinamidine cyclo-ligase (334 aa).

This sequence belongs to the AIR synthase family.

It is found in the cytoplasm. The catalysed reaction is 2-formamido-N(1)-(5-O-phospho-beta-D-ribosyl)acetamidine + ATP = 5-amino-1-(5-phospho-beta-D-ribosyl)imidazole + ADP + phosphate + H(+). It functions in the pathway purine metabolism; IMP biosynthesis via de novo pathway; 5-amino-1-(5-phospho-D-ribosyl)imidazole from N(2)-formyl-N(1)-(5-phospho-D-ribosyl)glycinamide: step 2/2. The polypeptide is Phosphoribosylformylglycinamidine cyclo-ligase (Thermococcus gammatolerans (strain DSM 15229 / JCM 11827 / EJ3)).